A 443-amino-acid chain; its full sequence is Tubulin beta-1 chain (443 aa).

GTP is bound by residues Gln11, Glu69, Ser138, Gly142, Thr143, Gly144, Asn204, and Asn226. Glu69 contacts Mg(2+). The segment at 424–443 (QYQDATAEREGEYEEDYDEA) is disordered. Residues 434–443 (GEYEEDYDEA) are compositionally biased toward acidic residues.

This sequence belongs to the tubulin family. Dimer of alpha and beta chains. A typical microtubule is a hollow water-filled tube with an outer diameter of 25 nm and an inner diameter of 15 nM. Alpha-beta heterodimers associate head-to-tail to form protofilaments running lengthwise along the microtubule wall with the beta-tubulin subunit facing the microtubule plus end conferring a structural polarity. Microtubules usually have 13 protofilaments but different protofilament numbers can be found in some organisms and specialized cells. Requires Mg(2+) as cofactor.

The protein resides in the cytoplasm. Its subcellular location is the cytoskeleton. In terms of biological role, tubulin is the major constituent of microtubules, a cylinder consisting of laterally associated linear protofilaments composed of alpha- and beta-tubulin heterodimers. Microtubules grow by the addition of GTP-tubulin dimers to the microtubule end, where a stabilizing cap forms. Below the cap, tubulin dimers are in GDP-bound state, owing to GTPase activity of alpha-tubulin. The sequence is that of Tubulin beta-1 chain (TUBB1) from Anemia phyllitidis (Fern).